The sequence spans 603 residues: Cholinesterase (603 aa).

The signal sequence occupies residues 1–29 (MQTQHTKVTQTHFLLWILLLCMPFGKSHT). Asn-86 carries N-linked (GlcNAc...) asparagine glycosylation. Cys-94 and Cys-121 are disulfide-bonded. A glycan (N-linked (GlcNAc...) asparagine) is linked at Asn-135. Substrate is bound at residue 145–146 (GG). Ser-227 acts as the Acyl-ester intermediate in catalysis. Ser-227 carries the post-translational modification Phosphoserine. A glycan (N-linked (GlcNAc...) asparagine) is linked at Asn-270. Cys-281 and Cys-292 form a disulfide bridge. Residue Glu-354 is the Charge relay system of the active site. A glycan (N-linked (GlcNAc...) asparagine) is linked at Asn-370. Cys-429 and Cys-548 form a disulfide bridge. His-467 functions as the Charge relay system in the catalytic mechanism. N-linked (GlcNAc...) asparagine glycosylation is found at Asn-484, Asn-510, and Asn-515.

It belongs to the type-B carboxylesterase/lipase family. As to quaternary structure, homotetramer; disulfide-linked. Dimer of dimers. In terms of tissue distribution, present in most cells except erythrocytes.

The protein localises to the secreted. The catalysed reaction is an acylcholine + H2O = a carboxylate + choline + H(+). In terms of biological role, esterase with broad substrate specificity. Contributes to the inactivation of the neurotransmitter acetylcholine. Can degrade neurotoxic organophosphate esters. The chain is Cholinesterase (Bche) from Mus musculus (Mouse).